Reading from the N-terminus, the 355-residue chain is Mannonate dehydratase (355 aa).

This sequence belongs to the mannonate dehydratase family. Fe(2+) is required as a cofactor. Mn(2+) serves as cofactor.

It catalyses the reaction D-mannonate = 2-dehydro-3-deoxy-D-gluconate + H2O. It functions in the pathway carbohydrate metabolism; pentose and glucuronate interconversion. In terms of biological role, catalyzes the dehydration of D-mannonate. The protein is Mannonate dehydratase of Brachyspira hyodysenteriae (strain ATCC 49526 / WA1).